The following is a 470-amino-acid chain: GTPase Der (470 aa).

EngA-type G domains lie at 32–195 (PVVA…PTIS) and 206–379 (RRVA…KSWD). Residues 38–45 (GRPNVGKS), 85–89 (DTGGW), 147–150 (NKVD), 212–219 (GKPNVGKS), 259–263 (DTAGL), and 324–327 (NKWD) contribute to the GTP site. A KH-like domain is found at 380–462 (TRVSTGRLNT…PIRINVRVRE (83 aa)).

This sequence belongs to the TRAFAC class TrmE-Era-EngA-EngB-Septin-like GTPase superfamily. EngA (Der) GTPase family. Associates with the 50S ribosomal subunit.

Its function is as follows. GTPase that plays an essential role in the late steps of ribosome biogenesis. This Mycolicibacterium vanbaalenii (strain DSM 7251 / JCM 13017 / BCRC 16820 / KCTC 9966 / NRRL B-24157 / PYR-1) (Mycobacterium vanbaalenii) protein is GTPase Der.